A 415-amino-acid polypeptide reads, in one-letter code: Squalene synthase 11 (415 aa).

The next 2 membrane-spanning stretches (helical) occupy residues Ala-281–Phe-301 and Leu-392–Pro-412.

Belongs to the phytoene/squalene synthase family. The cofactor is Mg(2+). Mn(2+) serves as cofactor.

It localises to the endoplasmic reticulum membrane. The enzyme catalyses 2 (2E,6E)-farnesyl diphosphate + NADH + H(+) = squalene + 2 diphosphate + NAD(+). It catalyses the reaction 2 (2E,6E)-farnesyl diphosphate + NADPH + H(+) = squalene + 2 diphosphate + NADP(+). It participates in terpene metabolism; lanosterol biosynthesis; lanosterol from farnesyl diphosphate: step 1/3. Component of the triterpene saponins (e.g. ginsenosides or panaxosides) and phytosterols biosynthetic pathways. Catalyzes the biosynthesis of squalene. The sequence is that of Squalene synthase 11 from Panax ginseng (Korean ginseng).